A 328-amino-acid polypeptide reads, in one-letter code: tRNA dimethylallyltransferase (328 aa).

10–17 (GPTASGKT) contacts ATP. 12-17 (TASGKT) serves as a coordination point for substrate.

Belongs to the IPP transferase family. As to quaternary structure, monomer. It depends on Mg(2+) as a cofactor.

It carries out the reaction adenosine(37) in tRNA + dimethylallyl diphosphate = N(6)-dimethylallyladenosine(37) in tRNA + diphosphate. In terms of biological role, catalyzes the transfer of a dimethylallyl group onto the adenine at position 37 in tRNAs that read codons beginning with uridine, leading to the formation of N6-(dimethylallyl)adenosine (i(6)A). This chain is tRNA dimethylallyltransferase, found in Bifidobacterium longum subsp. infantis (strain ATCC 15697 / DSM 20088 / JCM 1222 / NCTC 11817 / S12).